Here is a 348-residue protein sequence, read N- to C-terminus: Oxidase ucsJ (348 aa).

This sequence belongs to the avfA family.

Its pathway is mycotoxin biosynthesis. Its function is as follows. Oxidase; part of the gene cluster that mediates the biosynthesis of UCS1025A, a member of the pyrrolizidinone family that acts as a strong telomerase inhibitor and displays potent antibacterial and antitumor properties. These compounds share a hemiaminal-containing pyrrolizidinone core fused with a gamma-lactone, giving a furopyrrolizidine that is connected to a decalin fragment. The polyketide synthase module (PKS) of the PKS-NRPS ucsA is responsible for the synthesis of the polyketide backbone via the condensation of an acetyl-CoA starter unit with 6 malonyl-CoA units. The downstream nonribosomal peptide synthetase (NRPS) module then amidates the carboxyl end of the polyketide with a 2S,3S-methylproline derived from L-isoleucine by the 2-oxoglutarate-dependent dioxygenase ucsF which converts L-isoleucine to (4S,5S)-4-methylpyrroline-5-carboxylate that is further converted to 2S,3S-methylproline by the pyrroline-5-carboxylate reductase ucsG. Reductive release of the completed aminoacyl polyketide from the assembly line can form the 3-pyrrolin-2-one structure via an intramolecular Knoevenagel reaction. Because ucsA lacks a designated enoylreductase (ER) domain, the required activity is provided the enoyl reductase ucsL. This keto acyclic precursor is the substrate of the Diels-Alderase ucsH, that catalyzes the Diels-Alder cycloaddition. Oxidation of the 3S-methyl group to a carboxylate by the cytochrome P450 monooxygenase ucsK allows an oxa-Michael cyclization that might involve the reductase/dehydrogenase ucsI and which furnishes the furopyrrolizidine. The oxidase ucsJ likely plays a critical role in stereoselective reduction of the C5-C6 double bond to afford the required R-configured carboxylate group. Further enolization and oxidation at C5 by an unidentified enzyme affords the last intermediate that can undergo oxa-Michael cyclization to yield UCS1025A. This chain is Oxidase ucsJ, found in Acremonium sp.